Consider the following 402-residue polypeptide: Deoxyguanosinetriphosphate triphosphohydrolase-like protein (402 aa).

The interval 20–39 is disordered; sequence PAFSRGRLVPEPESPTRTPF. Residues 73-217 form the HD domain; sequence RLTHTIEVAQ…AAIADDIAYN (145 aa).

The protein belongs to the dGTPase family. Type 2 subfamily.

In Brucella ovis (strain ATCC 25840 / 63/290 / NCTC 10512), this protein is Deoxyguanosinetriphosphate triphosphohydrolase-like protein.